The following is a 210-amino-acid chain: Prolactin-2 (210 aa).

The N-terminal stretch at 1–23 (MARRSQGTKLHLAVLCLVVSCHA) is a signal peptide. Cystine bridges form between Cys69–Cys183 and Cys200–Cys210.

Belongs to the somatotropin/prolactin family.

The protein localises to the secreted. The protein is Prolactin-2 (prl2) of Oncorhynchus keta (Chum salmon).